Consider the following 609-residue polypeptide: Mitochondrial nucleoid-associated protein 1 (609 aa).

Topologically, residues 1–554 (MSDNPPRMEV…CNTTIRKSGF (554 aa)) are extracellular. Disordered regions lie at residues 133 to 163 (QEET…GESR) and 406 to 425 (SPEG…QASH). Residues 146 to 161 (TSPKRELAEDLPKSGE) show a composition bias toward basic and acidic residues. The helical transmembrane segment at 555–571 (GGITMLSTGYFVLCCSW) threads the bilayer. Residues 572–609 (SFRRLKKLCRPLPWKSTVPPSVGVAKTTGDCRSKTCLD) are Cytoplasmic-facing.

It is found in the mitochondrion inner membrane. The protein resides in the mitochondrion matrix. The protein localises to the mitochondrion nucleoid. Critical regulator of mitochondrial DNA (mtDNA) abundance. Binds dsDNA throughout the mitochondrial genome without sequence specificity and controls mtDNA copy number by promoting its replication. Also plays important roles in mitochondrial metabolism and cell proliferation. This Pongo abelii (Sumatran orangutan) protein is Mitochondrial nucleoid-associated protein 1.